A 233-amino-acid polypeptide reads, in one-letter code: Zinc import ATP-binding protein ZnuC (233 aa).

The ABC transporter domain occupies 6-222 (IEFRNVSKKF…SEFSNALSSL (217 aa)). 38 to 45 (GPNGAGKT) lines the ATP pocket.

This sequence belongs to the ABC transporter superfamily. Zinc importer (TC 3.A.1.15.5) family. In terms of assembly, the complex is composed of two ATP-binding proteins (ZnuC), two transmembrane proteins (ZnuB) and a solute-binding protein (ZnuA).

The protein localises to the cell inner membrane. It catalyses the reaction Zn(2+)(out) + ATP(in) + H2O(in) = Zn(2+)(in) + ADP(in) + phosphate(in) + H(+)(in). Its function is as follows. Part of the ABC transporter complex ZnuABC involved in zinc import. Responsible for energy coupling to the transport system. This chain is Zinc import ATP-binding protein ZnuC, found in Rickettsia prowazekii (strain Madrid E).